A 430-amino-acid chain; its full sequence is MQASIESTGNLERRLTFTLPQERLETHVGGRLRELARTTRIKGFRPGKVPTKVIEQRFGQQVRAEAMEGLLRETFDSAVREHSLRLAGNPRIDQGETDFDFVATFEVVPDFGDIDVTTLSVVRATAEVTDADIDQMIENLRLQRRIWNPVERGAQAGDLVALETWSQAGDERLPADGVETGSSVLGSGVMFDQIEKGLEGLTKGEEKTLSVDFPAEWRVPQLAGKTVQVHVKAVEVSEPVLPAVDKEFIKSFGVKSGDAEQFRADIRTNLERELKGALMNRLRREVGEQLIAAYAHVEMPPRLVENEARSMLAQQVEQVRRSGRDPGQVPADAHQGFMDAAAKRVLVGLLVGEVARRNELRLESRRVSDTLRLIASTYEEPEQVIEMYRNDPQLMNGLQSRVMEEQVIDWIAERAQHTEQSLSFQDAIRV.

The 86-residue stretch at 157-242 folds into the PPIase FKBP-type domain; the sequence is GDLVALETWS…AVEVSEPVLP (86 aa).

This sequence belongs to the FKBP-type PPIase family. Tig subfamily.

The protein localises to the cytoplasm. The catalysed reaction is [protein]-peptidylproline (omega=180) = [protein]-peptidylproline (omega=0). Its function is as follows. Involved in protein export. Acts as a chaperone by maintaining the newly synthesized protein in an open conformation. Functions as a peptidyl-prolyl cis-trans isomerase. The sequence is that of Trigger factor from Xanthomonas oryzae pv. oryzae (strain PXO99A).